The chain runs to 33 residues: Large ribosomal subunit protein eL28 (33 aa).

The protein belongs to the eukaryotic ribosomal protein eL28 family. In terms of assembly, component of the large ribosomal subunit.

Its subcellular location is the cytoplasm. Its function is as follows. Component of the large ribosomal subunit. The ribosome is a large ribonucleoprotein complex responsible for the synthesis of proteins in the cell. The polypeptide is Large ribosomal subunit protein eL28 (rpl28) (Xenopus laevis (African clawed frog)).